A 202-amino-acid chain; its full sequence is Small ribosomal subunit protein uS4c (202 aa).

The region spanning Met90–Ile153 is the S4 RNA-binding domain.

Belongs to the universal ribosomal protein uS4 family. Part of the 30S ribosomal subunit. Contacts protein S5. The interaction surface between S4 and S5 is involved in control of translational fidelity.

It is found in the plastid. The protein resides in the chloroplast. Functionally, one of the primary rRNA binding proteins, it binds directly to 16S rRNA where it nucleates assembly of the body of the 30S subunit. With S5 and S12 plays an important role in translational accuracy. The sequence is that of Small ribosomal subunit protein uS4c (rps4) from Hypopterygium laricinum (Moss).